The following is a 490-amino-acid chain: UDP-N-acetylmuramate--L-alanine ligase (490 aa).

126–132 (GTHGKTT) lines the ATP pocket.

Belongs to the MurCDEF family.

It is found in the cytoplasm. The catalysed reaction is UDP-N-acetyl-alpha-D-muramate + L-alanine + ATP = UDP-N-acetyl-alpha-D-muramoyl-L-alanine + ADP + phosphate + H(+). Its pathway is cell wall biogenesis; peptidoglycan biosynthesis. In terms of biological role, cell wall formation. The sequence is that of UDP-N-acetylmuramate--L-alanine ligase from Sodalis glossinidius (strain morsitans).